A 310-amino-acid chain; its full sequence is Alpha/beta hydrolase domain-containing protein 17A (310 aa).

The tract at residues 38–61 (VPEPEPGPGGAGAAPSGPLRTSAA) is disordered. Active-site charge relay system residues include Ser190, Asp255, and His284. Ser307 carries the phosphoserine modification.

Belongs to the AB hydrolase superfamily. ABHD17 family. In terms of processing, palmitoylated on cysteine residues located in a cysteine cluster at the N-terminus which promotes membrane localization. Palmitoylation is required for post-synaptic localization and for depalmitoylating activity towards DLG4/PSD95.

The protein localises to the cell membrane. Its subcellular location is the endosome membrane. It is found in the cell projection. The protein resides in the dendritic spine. It localises to the postsynaptic density membrane. It catalyses the reaction S-hexadecanoyl-L-cysteinyl-[protein] + H2O = L-cysteinyl-[protein] + hexadecanoate + H(+). Its function is as follows. Hydrolyzes fatty acids from S-acylated cysteine residues in proteins. Has depalmitoylating activity towards NRAS. Has depalmitoylating activity towards DLG4/PSD95. May have depalmitoylating activity towars MAP6. This chain is Alpha/beta hydrolase domain-containing protein 17A, found in Mus musculus (Mouse).